A 242-amino-acid chain; its full sequence is Ribonuclease PH (242 aa).

Phosphate is bound by residues Arg86 and 124–126; that span reads GTR.

Belongs to the RNase PH family. As to quaternary structure, homohexameric ring arranged as a trimer of dimers.

The catalysed reaction is tRNA(n+1) + phosphate = tRNA(n) + a ribonucleoside 5'-diphosphate. Phosphorolytic 3'-5' exoribonuclease that plays an important role in tRNA 3'-end maturation. Removes nucleotide residues following the 3'-CCA terminus of tRNAs; can also add nucleotides to the ends of RNA molecules by using nucleoside diphosphates as substrates, but this may not be physiologically important. Probably plays a role in initiation of 16S rRNA degradation (leading to ribosome degradation) during starvation. This is Ribonuclease PH from Photorhabdus laumondii subsp. laumondii (strain DSM 15139 / CIP 105565 / TT01) (Photorhabdus luminescens subsp. laumondii).